The sequence spans 51 residues: Ovomucoid (51 aa).

The Kazal-like domain maps to 3-51 (VDCSGYPKPACTLEYFPLCGSDNQTYANKCAFCNAVVEKNVTLRHLGKC). 3 disulfides stabilise this stretch: C5/C35, C13/C32, and C21/C51. N-linked (GlcNAc...) asparagine glycosylation occurs at N42.

The protein localises to the secreted. In Nothoprocta cinerascens (Brushland tinamou), this protein is Ovomucoid.